The primary structure comprises 241 residues: Serine protease 58 (241 aa).

An N-terminal signal peptide occupies residues 1–17 (MKFILLWALLNLTVALA). A Peptidase S1 domain is found at 18–239 (FNPDYTVSST…YIPWIENVIQ (222 aa)). A disulfide bond links C41 and C57. Active-site charge relay system residues include H56 and D101. 3 disulfides stabilise this stretch: C133–C201, C165–C180, and C191–C215. Residues N156 and N173 are each glycosylated (N-linked (GlcNAc...) asparagine). The active-site Charge relay system is the S195.

The protein belongs to the peptidase S1 family.

It localises to the secreted. It catalyses the reaction Preferential cleavage: Arg-|-Xaa, Lys-|-Xaa.. The protein is Serine protease 58 (PRSS58) of Homo sapiens (Human).